A 423-amino-acid chain; its full sequence is Adenylosuccinate synthetase (423 aa).

Residues 12-18 and 40-42 each bind GTP; these read GDEGKGK and GHT. The active-site Proton acceptor is the Asp13. The Mg(2+) site is built by Asp13 and Gly40. IMP is bound by residues 13-16, 38-41, Thr128, Arg142, Gln223, Thr238, and Arg302; these read DEGK and NAGH. His41 functions as the Proton donor in the catalytic mechanism. 298-304 is a binding site for substrate; sequence TTTGRPR. GTP contacts are provided by residues Arg304, 330–332, and 412–414; these read RLD and CIG.

This sequence belongs to the adenylosuccinate synthetase family. As to quaternary structure, homodimer. It depends on Mg(2+) as a cofactor.

The protein resides in the cytoplasm. The catalysed reaction is IMP + L-aspartate + GTP = N(6)-(1,2-dicarboxyethyl)-AMP + GDP + phosphate + 2 H(+). It functions in the pathway purine metabolism; AMP biosynthesis via de novo pathway; AMP from IMP: step 1/2. Its function is as follows. Plays an important role in the de novo pathway of purine nucleotide biosynthesis. Catalyzes the first committed step in the biosynthesis of AMP from IMP. This chain is Adenylosuccinate synthetase, found in Dehalococcoides mccartyi (strain ATCC BAA-2266 / KCTC 15142 / 195) (Dehalococcoides ethenogenes (strain 195)).